A 1328-amino-acid polypeptide reads, in one-letter code: MDQKILSLAAEKTADKLQEFLQTLREGDLTNLLQNQAVKGKVAGALLRAIFKGSPCSEEAGTLRRRKIYTCCIQLVESGDLQKEIASEIIGLLMLEAHHFPGPLLVELANEFISAVREGSLVNGKSLELLPIILTALATKKENLAYGKGVLSGEECKKQLINTLCSGRWDQQYVIQLTSMFKDVPLTAEEVEFVVEKALSMFSKMNLQEIPPLVYQLLVLSSKGSRKSVLEGIIAFFSALDKQHNEEQSGDELLDVVTVPSGELRHVEGTIILHIVFAIKLDYELGRELVKHLKVGQQGDSNNNLSPFSIALLLSVTRIQRFQDQVLDLLKTSVVKSFKDLQLLQGSKFLQNLVPHRSYVSTMILEVVKNSVHSWDHVTQGLVELGFILMDSYGPKKVLDGKTIETSPSLSRMPNQHACKLGANILLETFKIHEMIRQEILEQVLNRVVTRASSPISHFLDLLSNIVMYAPLVLQSCSSKVTEAFDYLSFLPLQTVQRLLKAVQPLLKVSMSMRDCLILVLRKAMFANQLDARKSAVAGFLLLLKNFKVLGSLSSSQCSQSLSVSQVHVDVHSHYNSVANETFCLEIMDSLRRCLSQQADVRLMLYEGFYDVLRRNSQLANSVMQTLLSQLKQFYEPKPDLLPPLKLEACILTQGDKISLQEPLDYLLCCIQHCLAWYKNTVIPLQQGEEEEEEEEAFYEDLDDILESITNRMIKSELEDFELDKSADFSQSTSIGIKNNICAFLVMGVCEVLIEYNFSISSFSKNRFEDILSLFMCYKKLSDILNEKAGKAKTKMANKTSDSLLSMKFVSSLLTALFRDSIQSHQESLSVLRSSNEFMRYAVNVALQKVQQLKETGHVSGPDGQNPEKIFQNLCDITRVLLWRYTSIPTSVEESGKKEKGKSISLLCLEGLQKIFSAVQQFYQPKIQQFLRALDVTDKEGEEREDADVSVTQRTAFQIRQFQRSLLNLLSSQEEDFNSKEALLLVTVLTSLSKLLEPSSPQFVQMLSWTSKICKENSREDALFCKSLMNLLFSLHVSYKSPVILLRDLSQDIHGHLGDIDQDVEVEKTNHFAIVNLRTAAPTVCLLVLSQAEKVLEEVDWLITKLKGQVSQETLSEEASSQATLPNQPVEKAIIMQLGTLLTFFHELVQTALPSGSCVDTLLKDLCKMYTTLTALVRYYLQVCQSSGGIPKNMEKLVKLSGSHLTPLCYSFISYVQNKSKSLNYTGEKKEKPAAVATAMARVLRETKPIPNLIFAIEQYEKFLIHLSKKSKVNLMQHMKLSTSRDFKIKGNILDMVLREDGEDENEEGTASEHGGQNKEPAKKKRKK.

A Phosphoserine modification is found at Ser-407. Residue Lys-523 forms a Glycyl lysine isopeptide (Lys-Gly) (interchain with G-Cter in ubiquitin) linkage. Phosphoserine occurs at positions 556 and 730. The residue at position 952 (Thr-952) is a Phosphothreonine. Ser-1121 is subject to Phosphoserine. Positions 1300-1328 are disordered; sequence EDGEDENEEGTASEHGGQNKEPAKKKRKK. Acidic residues predominate over residues 1301–1310; sequence DGEDENEEGT.

The protein belongs to the Fanconi anemia group I protein family. As to quaternary structure, homodimer. Part of a FANCI-FANCD2 heterodimeric complex that binds and scans dsDNA for DNA damage. Interacts with FANCL. Interacts with MTMR15/FAN1. Interacts with POLN. Interacts with UBL5; the interaction promotes FANCI homodimerization. Monoubiquitinated by FANCL on Lys-523 during S phase and upon genotoxic stress. Deubiquitinated by USP1 as cells enter G2/M, or once DNA repair is completed. Monoubiquitination requires the FANCA-FANCB-FANCC-FANCE-FANCF-FANCG-FANCM complex. Ubiquitination is required for binding to chromatin, DNA repair, and normal cell cycle progression. Monoubiquitination is stimulated by DNA-binding. Post-translationally, phosphorylated in response to DNA damage by ATM and/or ATR. Phosphorylation of FANCI promotes ubiquitination of FANCD2, which prevents DNA release from the FANCI-FANCD2 complex.

The protein localises to the nucleus. It localises to the cytoplasm. Plays an essential role in the repair of DNA double-strand breaks by homologous recombination and in the repair of interstrand DNA cross-links (ICLs) by promoting FANCD2 monoubiquitination by FANCL and participating in recruitment to DNA repair sites. The FANCI-FANCD2 complex binds and scans double-stranded DNA (dsDNA) for DNA damage; this complex stalls at DNA junctions between double-stranded DNA and single-stranded DNA. Participates in S phase and G2 phase checkpoint activation upon DNA damage. The chain is Fanconi anemia group I protein (FANCI) from Homo sapiens (Human).